Consider the following 235-residue polypeptide: Claudin-16 (235 aa).

Residues 1–3 are Cytoplasmic-facing; sequence MKD. Residues 4-24 form a helical membrane-spanning segment; sequence LLQYAACFLAIFSTGFLIVAT. Residues 25–79 lie on the Extracellular side of the membrane; the sequence is RTDCWMVNADDSLEVSTKCRGLWWECVTNAFDGIRTCDEYDSIYAEHPLKLVVTR. A helical transmembrane segment spans residues 80-100; sequence ALMITADILAGFGFITLLLGL. Residues 101 to 115 lie on the Cytoplasmic side of the membrane; that stretch reads DCVKFLPDEPHIKVR. The chain crosses the membrane as a helical span at residues 116-136; it reads LCFVAGTVLLIAGTPGIIGSV. At 137–169 the chain is on the extracellular side; the sequence is WYAVDVYVERSSLVLHNIFLGIQYKFGWSCWLG. A helical transmembrane segment spans residues 170–190; the sequence is MAGSLGCFLAGALLTCCLYLF. The Cytoplasmic portion of the chain corresponds to 191 to 235; the sequence is KDVGPERNYPYAMRKPYSTAGVSMAKSYKAPRTETAKMYAVDTRV. The Interaction with TJP1 motif lies at 233-235; that stretch reads TRV.

Belongs to the claudin family. Can form heteropolymeric tight junction strands with other claudins. Interacts with CLDN19. Interacts (via PDZ-binding motif TRV) with TJP1 (via PDZ domain). Cannot form tight junction strands on its own.

It is found in the cell junction. It localises to the tight junction. The protein resides in the cell membrane. The enzyme catalyses Mg(2+)(in) = Mg(2+)(out). It carries out the reaction Ca(2+)(in) = Ca(2+)(out). The catalysed reaction is Na(+)(in) = Na(+)(out). It catalyses the reaction K(+)(in) = K(+)(out). The enzyme catalyses Rb(+)(in) = Rb(+)(out). It carries out the reaction Cs(+)(in) = Cs(+)(out). The catalysed reaction is Li(+)(in) = Li(+)(out). Forms paracellular channels: coassembles with CLDN19 into tight junction strands with cation-selective channels through the strands, conveying epithelial permeability in a process known as paracellular tight junction permeability. Involved in the maintenance of ion gradients along the nephron. In the thick ascending limb (TAL) of Henle's loop, facilitates sodium paracellular permeability from the interstitial compartment to the lumen, contributing to the lumen-positive transepithelial potential that drives paracellular magnesium and calcium reabsorption. The protein is Claudin-16 of Rattus norvegicus (Rat).